We begin with the raw amino-acid sequence, 309 residues long: Ras-like protein 1 (309 aa).

Residues 20–25, 36–42, 66–67, 123–126, and 153–155 each bind GTP; these read GVGKSA, VDEYDPT, AG, NKLD, and SAK. The Effector region signature appears at 39–47; the sequence is YDPTIEDSY. The interval 177–303 is disordered; it reads KYNSMNRQLD…SANARKESSG (127 aa). 2 stretches are compositionally biased toward polar residues: residues 179–188 and 209–235; these read NSMNRQLDNT and NGSYVLDNSLTNAGTGSSSKSAVNHNG. The segment covering 236–245 has biased composition (basic and acidic residues); that stretch reads ETTKRTDEKN. Positions 246 to 256 are enriched in low complexity; that stretch reads YVNQNNNNEGN. The segment covering 257–296 has biased composition (polar residues); that stretch reads TKYSSNGNGNRSDISRGNQNNALNSRSKQSAEPQKNSSAN. Residue Cys-305 is the site of S-palmitoyl cysteine attachment. At Cys-306 the chain carries Cysteine methyl ester. The S-farnesyl cysteine moiety is linked to residue Cys-306. A propeptide spans 307 to 309 (removed in mature form); the sequence is IIC.

It belongs to the small GTPase superfamily. Ras family. In terms of processing, farnesylated by RAM1-RAM2, which is required for targeting RAS1 to the cytoplasmic site of the endoplasmic reticulum, where proteolytic processing of the C-terminus by RCE1 and methylation of the resulting carboxyl group by STE14 occurs. Palmitoylated by the ERF2-SHR5 complex, which is required for proper plasma membrane localization of RAS1.

The protein localises to the cell membrane. It carries out the reaction GTP + H2O = GDP + phosphate + H(+). Its activity is regulated as follows. Alternates between an inactive form bound to GDP and an active form bound to GTP. Activated by guanine nucleotide-exchange factor (GEF) CDC25 and inactivated by GTPase-activating proteins (GAPs) IRA1 and IRA2. The S.cerevisiae Ras proteins modulate the activity of the adenylate cyclase catalytic subunit and therefore affect the biosynthesis of cyclic-AMP. This Saccharomyces cerevisiae (strain ATCC 204508 / S288c) (Baker's yeast) protein is Ras-like protein 1 (RAS1).